The chain runs to 290 residues: Ribosomal RNA small subunit methyltransferase A (290 aa).

Residues N27, L29, G54, E75, D100, and N125 each coordinate S-adenosyl-L-methionine.

This sequence belongs to the class I-like SAM-binding methyltransferase superfamily. rRNA adenine N(6)-methyltransferase family. RsmA subfamily.

Its subcellular location is the cytoplasm. It catalyses the reaction adenosine(1518)/adenosine(1519) in 16S rRNA + 4 S-adenosyl-L-methionine = N(6)-dimethyladenosine(1518)/N(6)-dimethyladenosine(1519) in 16S rRNA + 4 S-adenosyl-L-homocysteine + 4 H(+). In terms of biological role, specifically dimethylates two adjacent adenosines (A1518 and A1519) in the loop of a conserved hairpin near the 3'-end of 16S rRNA in the 30S particle. May play a critical role in biogenesis of 30S subunits. The chain is Ribosomal RNA small subunit methyltransferase A from Streptococcus thermophilus (strain ATCC BAA-250 / LMG 18311).